The following is a 628-amino-acid chain: Chaperone protein DnaK (628 aa).

A Phosphothreonine; by autocatalysis modification is found at threonine 197. Residues 595-604 show a composition bias toward basic and acidic residues; the sequence is AEAMYKKEQG. The tract at residues 595-628 is disordered; sequence AEAMYKKEQGEQAGAQPNQKAKKDDDDVIDAEVE.

This sequence belongs to the heat shock protein 70 family.

Acts as a chaperone. The protein is Chaperone protein DnaK of Aliarcobacter butzleri (strain RM4018) (Arcobacter butzleri).